Here is a 234-residue protein sequence, read N- to C-terminus: DNA repair protein RecO (234 aa).

Belongs to the RecO family.

In terms of biological role, involved in DNA repair and RecF pathway recombination. This Alteromonas mediterranea (strain DSM 17117 / CIP 110805 / LMG 28347 / Deep ecotype) protein is DNA repair protein RecO.